A 76-amino-acid polypeptide reads, in one-letter code: ATP synthase subunit c (76 aa).

2 helical membrane passes run 8–28 (LLAA…GVGI) and 55–75 (VAFA…LIFV).

Belongs to the ATPase C chain family. F-type ATPases have 2 components, F(1) - the catalytic core - and F(0) - the membrane proton channel. F(1) has five subunits: alpha(3), beta(3), gamma(1), delta(1), epsilon(1). F(0) has three main subunits: a(1), b(2) and c(10-14). The alpha and beta chains form an alternating ring which encloses part of the gamma chain. F(1) is attached to F(0) by a central stalk formed by the gamma and epsilon chains, while a peripheral stalk is formed by the delta and b chains.

It localises to the cell membrane. Its function is as follows. F(1)F(0) ATP synthase produces ATP from ADP in the presence of a proton or sodium gradient. F-type ATPases consist of two structural domains, F(1) containing the extramembraneous catalytic core and F(0) containing the membrane proton channel, linked together by a central stalk and a peripheral stalk. During catalysis, ATP synthesis in the catalytic domain of F(1) is coupled via a rotary mechanism of the central stalk subunits to proton translocation. In terms of biological role, key component of the F(0) channel; it plays a direct role in translocation across the membrane. A homomeric c-ring of between 10-14 subunits forms the central stalk rotor element with the F(1) delta and epsilon subunits. The chain is ATP synthase subunit c from Dehalococcoides mccartyi (strain ATCC BAA-2266 / KCTC 15142 / 195) (Dehalococcoides ethenogenes (strain 195)).